Here is a 291-residue protein sequence, read N- to C-terminus: Serine/threonine-protein phosphatase Pgam5, mitochondrial (291 aa).

A helical membrane pass occupies residues 7–23 (FACGTGAGLAAFYLQRL). The interval 59–78 (KSLVRPQKNEQPQEQNRYNS) is disordered. Positions 67-77 (NEQPQEQNRYN) are enriched in polar residues.

This sequence belongs to the phosphoglycerate mutase family. BPG-dependent PGAM subfamily. In terms of assembly, interacts with Pk92B/ASK1.

The protein localises to the mitochondrion outer membrane. It catalyses the reaction O-phospho-L-seryl-[protein] + H2O = L-seryl-[protein] + phosphate. It carries out the reaction O-phospho-L-threonyl-[protein] + H2O = L-threonyl-[protein] + phosphate. Functionally, displays phosphatase activity for serine/threonine residues, and dephosphorylates and activates Pk92B kinase. Has apparently no phosphoglycerate mutase activity. The chain is Serine/threonine-protein phosphatase Pgam5, mitochondrial from Drosophila willistoni (Fruit fly).